The sequence spans 98 residues: Integration host factor subunit alpha (98 aa).

The disordered stretch occupies residues Phe-49 to Asp-70.

The protein belongs to the bacterial histone-like protein family. In terms of assembly, heterodimer of an alpha and a beta chain.

This protein is one of the two subunits of integration host factor, a specific DNA-binding protein that functions in genetic recombination as well as in transcriptional and translational control. This chain is Integration host factor subunit alpha, found in Sodalis glossinidius (strain morsitans).